We begin with the raw amino-acid sequence, 401 residues long: Imidazolonepropionase (401 aa).

Fe(3+) contacts are provided by His-70 and His-72. Zn(2+) is bound by residues His-70 and His-72. 4-imidazolone-5-propanoate contacts are provided by Arg-79, Tyr-142, and His-175. Tyr-142 serves as a coordination point for N-formimidoyl-L-glutamate. His-238 lines the Fe(3+) pocket. His-238 serves as a coordination point for Zn(2+). Residue Gln-241 coordinates 4-imidazolone-5-propanoate. Residue Asp-313 participates in Fe(3+) binding. Asp-313 is a Zn(2+) binding site. N-formimidoyl-L-glutamate-binding residues include Asn-315 and Gly-317. Thr-318 provides a ligand contact to 4-imidazolone-5-propanoate.

This sequence belongs to the metallo-dependent hydrolases superfamily. HutI family. Zn(2+) is required as a cofactor. It depends on Fe(3+) as a cofactor.

It localises to the cytoplasm. It catalyses the reaction 4-imidazolone-5-propanoate + H2O = N-formimidoyl-L-glutamate. It functions in the pathway amino-acid degradation; L-histidine degradation into L-glutamate; N-formimidoyl-L-glutamate from L-histidine: step 3/3. In terms of biological role, catalyzes the hydrolytic cleavage of the carbon-nitrogen bond in imidazolone-5-propanoate to yield N-formimidoyl-L-glutamate. It is the third step in the universal histidine degradation pathway. In Acidiphilium cryptum (strain JF-5), this protein is Imidazolonepropionase.